A 455-amino-acid polypeptide reads, in one-letter code: UDP-N-acetylmuramoylalanine--D-glutamate ligase (455 aa).

Position 118–124 (118–124 (GSNAKST)) interacts with ATP.

It belongs to the MurCDEF family.

Its subcellular location is the cytoplasm. It carries out the reaction UDP-N-acetyl-alpha-D-muramoyl-L-alanine + D-glutamate + ATP = UDP-N-acetyl-alpha-D-muramoyl-L-alanyl-D-glutamate + ADP + phosphate + H(+). It functions in the pathway cell wall biogenesis; peptidoglycan biosynthesis. Functionally, cell wall formation. Catalyzes the addition of glutamate to the nucleotide precursor UDP-N-acetylmuramoyl-L-alanine (UMA). The sequence is that of UDP-N-acetylmuramoylalanine--D-glutamate ligase from Chromohalobacter salexigens (strain ATCC BAA-138 / DSM 3043 / CIP 106854 / NCIMB 13768 / 1H11).